The sequence spans 466 residues: 23S rRNA (uracil(1939)-C(5))-methyltransferase RlmD (466 aa).

Residues 11-69 (KITDTKHKEIVINRLDHLGAGIGHLNNKSIFVDGLLPGEKALVQITDDKKQYARAKVIK) form the TRAM domain. [4Fe-4S] cluster is bound by residues Cys-82, Cys-88, Cys-91, and Cys-184. S-adenosyl-L-methionine is bound by residues Gln-287, Phe-316, Asn-321, Glu-337, Asn-364, and Asp-385. Residue Cys-411 is the Nucleophile of the active site.

It belongs to the class I-like SAM-binding methyltransferase superfamily. RNA M5U methyltransferase family. RlmD subfamily.

It catalyses the reaction uridine(1939) in 23S rRNA + S-adenosyl-L-methionine = 5-methyluridine(1939) in 23S rRNA + S-adenosyl-L-homocysteine + H(+). Functionally, catalyzes the formation of 5-methyl-uridine at position 1939 (m5U1939) in 23S rRNA. The chain is 23S rRNA (uracil(1939)-C(5))-methyltransferase RlmD from Photobacterium profundum (strain SS9).